The primary structure comprises 425 residues: Histone-binding protein RBBP4-A (425 aa).

At alanine 2 the chain carries N-acetylalanine. WD repeat units lie at residues 32-125, 126-175, 176-223, 225-270, 271-314, 315-371, and 372-404; these read YDLV…THDG, EVNR…RLRG, HQKE…KTIF, GHTA…HSVD, AHTA…HSFE, SHKD…FIHG, and GHTA…VWQM.

It belongs to the WD repeat RBAP46/RBAP48/MSI1 family. In terms of assembly, binds directly to histone H4, probably via helix 1 of the histone fold, a region that is not accessible when histone H4 is in chromatin. Probably forms a large corepressor complex that contains ncor1, sin3a, hdac1-A and/or hdac1-B, hdac2, rbbp4-A and/or rbbp4-B and possibly rbbp7.

It localises to the nucleus. The protein localises to the chromosome. The protein resides in the telomere. Core histone-binding subunit that may target chromatin assembly factors, chromatin remodeling factors and histone deacetylases to their histone substrates in a manner that is regulated by nucleosomal DNA. Component of several complexes which regulate chromatin metabolism. The chain is Histone-binding protein RBBP4-A (rbbp4-a) from Xenopus laevis (African clawed frog).